Reading from the N-terminus, the 285-residue chain is HTH-type transcriptional regulator HexR (285 aa).

The HTH rpiR-type domain occupies 2-78 (KNLLEQIQSR…IQLAQSLASG (77 aa)). The H-T-H motif DNA-binding region spans 38–57 (IAALAQAAAVSEPTVNRFCR). Positions 122-261 (AVDLLIQARQ…ATGVTLRRGV (140 aa)) constitute an SIS domain.

Functionally, involved in regulation of glucose metabolism. Transcriptional repressor of the gap-1 gene and of the edd-glk-gltR-2 and zwf-pgl-eda operons. Acts by binding directly to an inverted pseudopalindromic sequence in the promoter region. The polypeptide is HTH-type transcriptional regulator HexR (Pseudomonas aeruginosa (strain ATCC 15692 / DSM 22644 / CIP 104116 / JCM 14847 / LMG 12228 / 1C / PRS 101 / PAO1)).